A 199-amino-acid polypeptide reads, in one-letter code: Glycerol-3-phosphate acyltransferase (199 aa).

The next 5 membrane-spanning stretches (helical) occupy residues Val-5–Leu-25, Ser-56–Phe-76, Ile-83–Gly-103, Ala-118–Val-138, and Tyr-141–Asp-161.

This sequence belongs to the PlsY family. Probably interacts with PlsX.

Its subcellular location is the cell inner membrane. It carries out the reaction an acyl phosphate + sn-glycerol 3-phosphate = a 1-acyl-sn-glycero-3-phosphate + phosphate. Its pathway is lipid metabolism; phospholipid metabolism. Catalyzes the transfer of an acyl group from acyl-phosphate (acyl-PO(4)) to glycerol-3-phosphate (G3P) to form lysophosphatidic acid (LPA). This enzyme utilizes acyl-phosphate as fatty acyl donor, but not acyl-CoA or acyl-ACP. The protein is Glycerol-3-phosphate acyltransferase of Shewanella halifaxensis (strain HAW-EB4).